The primary structure comprises 323 residues: Protein translocase subunit SecF (323 aa).

A run of 6 helical transmembrane segments spans residues 19–39 (GVIV…FKGF), 138–158 (ILSL…RYEW), 162–182 (LASV…VIVF), 189–209 (EVIA…IIIF), 244–264 (LTVF…IIGF), and 269–289 (LIGT…VALL).

This sequence belongs to the SecD/SecF family. SecF subfamily. Forms a complex with SecD. Part of the essential Sec protein translocation apparatus which comprises SecA, SecYEG and auxiliary proteins SecDF-YajC and YidC.

It is found in the cell inner membrane. In terms of biological role, part of the Sec protein translocase complex. Interacts with the SecYEG preprotein conducting channel. SecDF uses the proton motive force (PMF) to complete protein translocation after the ATP-dependent function of SecA. This chain is Protein translocase subunit SecF, found in Helicobacter pylori (strain J99 / ATCC 700824) (Campylobacter pylori J99).